We begin with the raw amino-acid sequence, 149 residues long: 3-dehydroquinate dehydratase (149 aa).

Tyr-26 (proton acceptor) is an active-site residue. Residues Asn-77, His-83, and Asp-90 each coordinate substrate. His-103 (proton donor) is an active-site residue. Substrate contacts are provided by residues 104-105 (LS) and Arg-114.

The protein belongs to the type-II 3-dehydroquinase family. As to quaternary structure, homododecamer.

It carries out the reaction 3-dehydroquinate = 3-dehydroshikimate + H2O. Its pathway is metabolic intermediate biosynthesis; chorismate biosynthesis; chorismate from D-erythrose 4-phosphate and phosphoenolpyruvate: step 3/7. Catalyzes a trans-dehydration via an enolate intermediate. The polypeptide is 3-dehydroquinate dehydratase (Aliivibrio fischeri (strain MJ11) (Vibrio fischeri)).